Here is a 117-residue protein sequence, read N- to C-terminus: Large ribosomal subunit protein bL17 (117 aa).

It belongs to the bacterial ribosomal protein bL17 family. Part of the 50S ribosomal subunit. Contacts protein L32.

This is Large ribosomal subunit protein bL17 from Exiguobacterium sp. (strain ATCC BAA-1283 / AT1b).